Consider the following 303-residue polypeptide: N-acetyl-D-glucosamine kinase (303 aa).

Residues 4 to 11 and 133 to 140 contribute to the ATP site; these read GFDIGGTK and GVGGGLVL. Residues His-157, Cys-177, Cys-179, and Cys-184 each contribute to the Zn(2+) site.

Belongs to the ROK (NagC/XylR) family. NagK subfamily.

The enzyme catalyses N-acetyl-D-glucosamine + ATP = N-acetyl-D-glucosamine 6-phosphate + ADP + H(+). The protein operates within cell wall biogenesis; peptidoglycan recycling. Its function is as follows. Catalyzes the phosphorylation of N-acetyl-D-glucosamine (GlcNAc) derived from cell-wall degradation, yielding GlcNAc-6-P. The chain is N-acetyl-D-glucosamine kinase from Salmonella heidelberg (strain SL476).